A 165-amino-acid chain; its full sequence is uncharacterized protein (165 aa).

The tract at residues 51–102 (KQAAVEPGARGGERPTGSQAGVTDTPDSAPFQRRSRAPRAREQAAQAGLNQK) is disordered. Residues 66-76 (TGSQAGVTDTP) are compositionally biased toward polar residues.

This is an uncharacterized protein from Mus musculus (Mouse).